The primary structure comprises 142 residues: Lysosomal enzyme trafficking factor (142 aa).

2 helical membrane-spanning segments follow: residues 8–28 (MGWIGVGLYLLASVAAVYYIF) and 76–96 (LLPFWVWATIFLLPYLQVFLF).

This sequence belongs to the LYSET family.

The protein localises to the golgi apparatus membrane. Required for mannose-6-phosphate-dependent trafficking of lysosomal enzymes. LYSET bridges GlcNAc-1-phosphate transferase (GNPTAB), to the membrane-bound transcription factor site-1 protease (MBTPS1), thus allowing proteolytic activation of the GNPTAB. GNPTAB is involved in the regulation of M6P-dependent Golgi-to-lysosome trafficking of lysosomal enzymes. LYSET is thus an essential factor for maturation and delivery of lysosomal hydrolases. This Danio rerio (Zebrafish) protein is Lysosomal enzyme trafficking factor (tmem251).